Here is a 131-residue protein sequence, read N- to C-terminus: Small ribosomal subunit protein uS11 (131 aa).

It belongs to the universal ribosomal protein uS11 family. In terms of assembly, part of the 30S ribosomal subunit. Interacts with proteins S7 and S18. Binds to IF-3.

In terms of biological role, located on the platform of the 30S subunit, it bridges several disparate RNA helices of the 16S rRNA. Forms part of the Shine-Dalgarno cleft in the 70S ribosome. This Helicobacter pylori (strain G27) protein is Small ribosomal subunit protein uS11.